We begin with the raw amino-acid sequence, 343 residues long: Methionine import ATP-binding protein MetN 2 (343 aa).

In terms of domain architecture, ABC transporter spans 2-241; that stretch reads IEFKDVTKTF…PQQAVTKRFV (240 aa). 38 to 45 provides a ligand contact to ATP; the sequence is GYSGAGKS.

It belongs to the ABC transporter superfamily. Methionine importer (TC 3.A.1.24) family. As to quaternary structure, the complex is composed of two ATP-binding proteins (MetN), two transmembrane proteins (MetI) and a solute-binding protein (MetQ).

It localises to the cell membrane. The catalysed reaction is L-methionine(out) + ATP + H2O = L-methionine(in) + ADP + phosphate + H(+). It catalyses the reaction D-methionine(out) + ATP + H2O = D-methionine(in) + ADP + phosphate + H(+). Functionally, part of the ABC transporter complex MetNIQ involved in methionine import. Responsible for energy coupling to the transport system. In Lactiplantibacillus plantarum (strain ATCC BAA-793 / NCIMB 8826 / WCFS1) (Lactobacillus plantarum), this protein is Methionine import ATP-binding protein MetN 2.